Here is a 122-residue protein sequence, read N- to C-terminus: UPF0102 protein Atu0303 (122 aa).

Belongs to the UPF0102 family.

In Agrobacterium fabrum (strain C58 / ATCC 33970) (Agrobacterium tumefaciens (strain C58)), this protein is UPF0102 protein Atu0303.